The sequence spans 516 residues: Gamma-aminobutyrate transaminase 1, mitochondrial (516 aa).

The N-terminal 47 residues, 1-47 (MVIARGLLRSNASSSSSQAINLLKYVTSTGSLQGHTQNLCDASTRHF), are a transit peptide targeting the mitochondrion. A compositionally biased stretch (polar residues) spans 45 to 60 (RHFSSVPSPQSNSTEE). The segment at 45 to 64 (RHFSSVPSPQSNSTEENGFK) is disordered. 171–172 (GS) contacts pyridoxal 5'-phosphate. A substrate-binding site is contributed by tyrosine 204. Aspartate 311 is a binding site for pyridoxal 5'-phosphate. Lysine 340 contacts substrate. At lysine 340 the chain carries N6-(pyridoxal phosphate)lysine.

It belongs to the class-III pyridoxal-phosphate-dependent aminotransferase family.

It localises to the mitochondrion. It carries out the reaction 4-aminobutanoate + pyruvate = succinate semialdehyde + L-alanine. The enzyme catalyses 4-aminobutanoate + glyoxylate = succinate semialdehyde + glycine. Functionally, transaminase that degrades gamma-amino butyric acid (GABA) and uses pyruvate as amino-group acceptor, but not 2-oxoglutarate. This is Gamma-aminobutyrate transaminase 1, mitochondrial from Oryza sativa subsp. indica (Rice).